The sequence spans 401 residues: Chorismate synthase (401 aa).

Positions 40 and 46 each coordinate NADP(+). Residues 135–137 (RAS), 256–257 (QA), glycine 302, 317–321 (KPISS), and arginine 343 contribute to the FMN site.

It belongs to the chorismate synthase family. As to quaternary structure, homotetramer. FMNH2 is required as a cofactor.

It carries out the reaction 5-O-(1-carboxyvinyl)-3-phosphoshikimate = chorismate + phosphate. It functions in the pathway metabolic intermediate biosynthesis; chorismate biosynthesis; chorismate from D-erythrose 4-phosphate and phosphoenolpyruvate: step 7/7. Its function is as follows. Catalyzes the anti-1,4-elimination of the C-3 phosphate and the C-6 proR hydrogen from 5-enolpyruvylshikimate-3-phosphate (EPSP) to yield chorismate, which is the branch point compound that serves as the starting substrate for the three terminal pathways of aromatic amino acid biosynthesis. This reaction introduces a second double bond into the aromatic ring system. The chain is Chorismate synthase from Saccharopolyspora erythraea (strain ATCC 11635 / DSM 40517 / JCM 4748 / NBRC 13426 / NCIMB 8594 / NRRL 2338).